The following is a 129-amino-acid chain: Small ribosomal subunit protein uS11 (129 aa).

The protein belongs to the universal ribosomal protein uS11 family. Part of the 30S ribosomal subunit. Interacts with proteins S7 and S18. Binds to IF-3.

Located on the platform of the 30S subunit, it bridges several disparate RNA helices of the 16S rRNA. Forms part of the Shine-Dalgarno cleft in the 70S ribosome. The chain is Small ribosomal subunit protein uS11 from Azotobacter vinelandii (strain DJ / ATCC BAA-1303).